The chain runs to 463 residues: Elongation factor 1-alpha (463 aa).

Residue G2 is modified to N,N,N-trimethylglycine. K3 is modified (N6,N6-dimethyllysine; alternate). The residue at position 3 (K3) is an N6-methyllysine; alternate. The 235-residue stretch at 5–239 (KNHVNVVVIG…DAIEPPSRPT (235 aa)) folds into the tr-type G domain. A G1 region spans residues 14–21 (GHVDSGKS). GTP is bound at residue 14-21 (GHVDSGKS). K30 carries the post-translational modification N6-methyllysine. Positions 70 to 74 (GITID) are G2. Position 79 is an N6,N6,N6-trimethyllysine (K79). Positions 91–94 (DAPG) are G3. GTP-binding positions include 91–95 (DAPGH) and 153–156 (NKMD). The segment at 153–156 (NKMD) is G4. The tract at residues 191-193 (SGW) is G5. K315 carries the post-translational modification N6,N6-dimethyllysine; alternate. K315 carries the post-translational modification N6-methyllysine; alternate. K389 is modified (N6-methyllysine).

This sequence belongs to the TRAFAC class translation factor GTPase superfamily. Classic translation factor GTPase family. EF-Tu/EF-1A subfamily.

Its subcellular location is the cytoplasm. This protein promotes the GTP-dependent binding of aminoacyl-tRNA to the A-site of ribosomes during protein biosynthesis. This chain is Elongation factor 1-alpha (TEF), found in Puccinia graminis (Black stem rust fungus).